The following is a 363-amino-acid chain: Cytochrome b (363 aa).

4 helical membrane passes run 23–43, 67–89, 102–122, and 164–184; these read FGFI…MLSF, WFVR…LHIM, SWYS…VGYV, and FFSI…FHLY. Residues His-73 and His-87 each contribute to the heme b site. Residues His-168 and His-182 each coordinate heme b. Position 187 (His-187) interacts with a ubiquinone. A run of 4 helical transmembrane segments spans residues 210-230, 271-291, 310-330, and 332-352; these read VLFS…VQSG, VFPT…LLVL, VWTT…SIGK, and VVHV…VLFI.

Belongs to the cytochrome b family. In terms of assembly, the main subunits of complex b-c1 are: cytochrome b, cytochrome c1 and the Rieske protein. The cofactor is heme b.

It localises to the mitochondrion inner membrane. Component of the ubiquinol-cytochrome c reductase complex (complex III or cytochrome b-c1 complex) that is part of the mitochondrial respiratory chain. The b-c1 complex mediates electron transfer from ubiquinol to cytochrome c. Contributes to the generation of a proton gradient across the mitochondrial membrane that is then used for ATP synthesis. In Theileria annulata, this protein is Cytochrome b (MT-CYB).